The chain runs to 313 residues: Porphobilinogen deaminase (313 aa).

Cys-242 carries the post-translational modification S-(dipyrrolylmethanemethyl)cysteine.

The protein belongs to the HMBS family. Monomer. The cofactor is dipyrromethane.

It carries out the reaction 4 porphobilinogen + H2O = hydroxymethylbilane + 4 NH4(+). The protein operates within porphyrin-containing compound metabolism; protoporphyrin-IX biosynthesis; coproporphyrinogen-III from 5-aminolevulinate: step 2/4. Functionally, tetrapolymerization of the monopyrrole PBG into the hydroxymethylbilane pre-uroporphyrinogen in several discrete steps. This Pseudomonas fluorescens (strain ATCC BAA-477 / NRRL B-23932 / Pf-5) protein is Porphobilinogen deaminase.